The following is a 249-amino-acid chain: Undecaprenyl-diphosphatase (249 aa).

Transmembrane regions (helical) follow at residues 11-31, 35-55, 80-100, 101-121, 135-155, 175-195, 202-222, and 226-246; these read GLTE…TAIF, PDVG…LIFV, LVLS…FIES, VFSS…LMLL, IPYL…LPGI, AVKY…ILEL, AEQL…LYLV, and VIGG…FFVL.

Belongs to the UppP family.

It is found in the cell membrane. The enzyme catalyses di-trans,octa-cis-undecaprenyl diphosphate + H2O = di-trans,octa-cis-undecaprenyl phosphate + phosphate + H(+). Functionally, catalyzes the dephosphorylation of undecaprenyl diphosphate (UPP). The chain is Undecaprenyl-diphosphatase from Methanococcus maripaludis (strain C5 / ATCC BAA-1333).